We begin with the raw amino-acid sequence, 289 residues long: Inorganic pyrophosphatase (289 aa).

Arginine 80 is a binding site for diphosphate. Positions 117, 122, and 154 each coordinate Mg(2+).

It belongs to the PPase family. As to quaternary structure, homodimer. The cofactor is Mg(2+).

It localises to the cytoplasm. The enzyme catalyses diphosphate + H2O = 2 phosphate + H(+). The polypeptide is Inorganic pyrophosphatase (ppa1) (Schizosaccharomyces pombe (strain 972 / ATCC 24843) (Fission yeast)).